We begin with the raw amino-acid sequence, 490 residues long: Nuclear transcription factor Y subunit beta (490 aa).

A disordered region spans residues 1–48; sequence MSGNEDFIYDDNSSSSISNQTDGGGGGGSSNNNSGGNANNNNNEGDRE. Low complexity predominate over residues 30-43; it reads SNNNSGGNANNNNN. A DNA-binding region spans residues 53–59; it reads LPIANII. The subunit association domain (SAD) stretch occupies residues 80–91; that stretch reads VQDCVSEFISFI. 2 disordered regions span residues 139–195 and 221–264; these read EKNS…QQQQ and QQQQ…NQQY. Over residues 181 to 195 the composition is skewed to low complexity; it reads QQQQQPPQVQQQQQQ. Residues 188-219 are a coiled coil; it reads QVQQQQQQQQQQQQQQLQQQQQLQQHQQQQLQ. The stretch at 269–307 forms a coiled coil; the sequence is QQQQQQQQQQQQQQQQQQQQQQQQQQQQQQQQQQQQQVQ. Disordered stretches follow at residues 325–370 and 399–490; these read NQQA…QHLQ and QFSN…PSTS. Residues 399–468 show a composition bias toward low complexity; it reads QFSNNNNNNN…GNSLHNSGNS (70 aa). The span at 478-490 shows a compositional bias: polar residues; that stretch reads PYISTNPEYPSTS.

The protein belongs to the NFYB/HAP3 subunit family. As to quaternary structure, heterotrimeric transcription factor composed of three components, nfyA, nfyB and nfyC. nfyB and nfyC must interact and dimerize for nfyA association and DNA binding.

The protein resides in the nucleus. In terms of biological role, component of the NF-Y/HAP transcription factor complex. The NF-Y complex stimulates the transcription of various genes by recognizing and binding to a CCAAT motif in promoters. This Dictyostelium discoideum (Social amoeba) protein is Nuclear transcription factor Y subunit beta (nfyB).